A 483-amino-acid chain; its full sequence is Glutamate mutase epsilon subunit (483 aa).

Arg66 contacts L-glutamate. Gly68 lines the adenosylcob(III)alamin pocket. Arg100 is an L-glutamate binding site. Asn123 contacts adenosylcob(III)alamin. L-glutamate contacts are provided by residues 149–150, Glu171, and Tyr177; that span reads RH. Residue Pro180 coordinates adenosylcob(III)alamin. Position 181 (Tyr181) interacts with L-glutamate. Adenosylcob(III)alamin is bound by residues Phe297, Lys326, Glu330, and Ile334.

It belongs to the methylaspartate mutase GlmE subunit family. In terms of assembly, heterotetramer composed of 2 epsilon subunits (GlmE) and 2 sigma subunits (GlmS). GlmE exists as a homodimer and GlmS as a monomer. Requires adenosylcob(III)alamin as cofactor.

The catalysed reaction is (2S,3S)-3-methyl-L-aspartate = L-glutamate. It participates in amino-acid degradation; L-glutamate degradation via mesaconate pathway; acetate and pyruvate from L-glutamate: step 1/4. With respect to regulation, competitively inhibited by (2S,4S)-4-fluoroglutamate, 2-methyleneglutarate, (2R,3RS)-3-fluoroglutamate and (S)-3-methylitaconate. In terms of biological role, catalyzes the carbon skeleton rearrangement of L-glutamate to L-threo-3-methylaspartate ((2S,3S)-3-methylaspartate). This chain is Glutamate mutase epsilon subunit, found in Clostridium cochlearium.